Consider the following 321-residue polypeptide: Nucleotide-binding protein GOX0815 (321 aa).

27–34 (GLSGAGKS) serves as a coordination point for ATP. Position 72-75 (72-75 (DVRS)) interacts with GTP.

This sequence belongs to the RapZ-like family.

Functionally, displays ATPase and GTPase activities. The polypeptide is Nucleotide-binding protein GOX0815 (Gluconobacter oxydans (strain 621H) (Gluconobacter suboxydans)).